The sequence spans 448 residues: Glucose-6-phosphate isomerase (448 aa).

Glutamate 291 serves as the catalytic Proton donor. Residues histidine 312 and lysine 425 contribute to the active site.

The protein belongs to the GPI family.

The protein resides in the cytoplasm. It catalyses the reaction alpha-D-glucose 6-phosphate = beta-D-fructose 6-phosphate. It functions in the pathway carbohydrate biosynthesis; gluconeogenesis. Its pathway is carbohydrate degradation; glycolysis; D-glyceraldehyde 3-phosphate and glycerone phosphate from D-glucose: step 2/4. Its function is as follows. Catalyzes the reversible isomerization of glucose-6-phosphate to fructose-6-phosphate. The protein is Glucose-6-phosphate isomerase of Symbiobacterium thermophilum (strain DSM 24528 / JCM 14929 / IAM 14863 / T).